The chain runs to 213 residues: Glycerol-3-phosphate acyltransferase (213 aa).

The next 5 helical transmembrane spans lie at 3 to 23 (LLLF…LWIG), 68 to 88 (ILLP…GFFA), 112 to 132 (VLLG…VLVL), 134 to 154 (LFSM…LSVL), and 163 to 183 (LPNY…IIII).

It belongs to the PlsY family. Probably interacts with PlsX.

It localises to the cell membrane. It catalyses the reaction an acyl phosphate + sn-glycerol 3-phosphate = a 1-acyl-sn-glycero-3-phosphate + phosphate. Its pathway is lipid metabolism; phospholipid metabolism. In terms of biological role, catalyzes the transfer of an acyl group from acyl-phosphate (acyl-PO(4)) to glycerol-3-phosphate (G3P) to form lysophosphatidic acid (LPA). This enzyme utilizes acyl-phosphate as fatty acyl donor, but not acyl-CoA or acyl-ACP. The sequence is that of Glycerol-3-phosphate acyltransferase from Streptococcus pyogenes serotype M28 (strain MGAS6180).